The chain runs to 427 residues: Enolase (427 aa).

Gln163 contacts (2R)-2-phosphoglycerate. Glu205 functions as the Proton donor in the catalytic mechanism. Residues Asp242, Glu285, and Asp312 each contribute to the Mg(2+) site. (2R)-2-phosphoglycerate-binding residues include Lys337, Arg366, Ser367, and Lys388. Catalysis depends on Lys337, which acts as the Proton acceptor.

This sequence belongs to the enolase family. The cofactor is Mg(2+).

The protein resides in the cytoplasm. It localises to the secreted. The protein localises to the cell surface. The catalysed reaction is (2R)-2-phosphoglycerate = phosphoenolpyruvate + H2O. Its pathway is carbohydrate degradation; glycolysis; pyruvate from D-glyceraldehyde 3-phosphate: step 4/5. In terms of biological role, catalyzes the reversible conversion of 2-phosphoglycerate (2-PG) into phosphoenolpyruvate (PEP). It is essential for the degradation of carbohydrates via glycolysis. The sequence is that of Enolase from Dechloromonas aromatica (strain RCB).